Reading from the N-terminus, the 225-residue chain is 7-carboxy-7-deazaguanine synthase (225 aa).

Residues 14–16 and Arg29 contribute to the substrate site; that span reads LQG. Residues 20–225 form the Radical SAM core domain; that stretch reads HFGKSAFFIR…LQTHKWLGVL (206 aa). [4Fe-4S] cluster is bound by residues Cys33, Cys37, and Cys40. Thr42 provides a ligand contact to Mg(2+). Thr77 provides a ligand contact to substrate. Residues Gly79 and 127 to 129 contribute to the S-adenosyl-L-methionine site; that span reads SPK.

The protein belongs to the radical SAM superfamily. 7-carboxy-7-deazaguanine synthase family. In terms of assembly, homodimer. [4Fe-4S] cluster is required as a cofactor. It depends on S-adenosyl-L-methionine as a cofactor. The cofactor is Mg(2+).

It catalyses the reaction 6-carboxy-5,6,7,8-tetrahydropterin + H(+) = 7-carboxy-7-deazaguanine + NH4(+). The protein operates within purine metabolism; 7-cyano-7-deazaguanine biosynthesis. Its function is as follows. Catalyzes the complex heterocyclic radical-mediated conversion of 6-carboxy-5,6,7,8-tetrahydropterin (CPH4) to 7-carboxy-7-deazaguanine (CDG), a step common to the biosynthetic pathways of all 7-deazapurine-containing compounds. The protein is 7-carboxy-7-deazaguanine synthase of Prochlorococcus marinus (strain SARG / CCMP1375 / SS120).